The chain runs to 563 residues: 4-hydroxy-7-methoxy-3-oxo-3,4-dihydro-2H-1,4-benzoxazin-2-yl glucoside beta-D-glucosidase 2, chloroplastic (563 aa).

Residues 1 to 51 constitute a chloroplast transit peptide; that stretch reads MAPLLAAAMNHAAHPVLRSHLGPNNESFSRHHLSSSPQSSKRRFNLSFTPR. The segment at 17-43 is disordered; that stretch reads LRSHLGPNNESFSRHHLSSSPQSSKRR. A beta-D-glucoside-binding positions include glutamine 89, histidine 193, and 241–242; that span reads NE. Residue glutamate 242 is the Proton donor of the active site. Cysteine 261 and cysteine 267 are oxidised to a cystine. The interval 322-358 is dimerization; that stretch reads SFLDEQAKERSMDINLGWFLEPVVRGDYPFSMRSLAR. An a beta-D-glucoside-binding site is contributed by tyrosine 384. 2 dimerization regions span residues 391–402 and 447–450; these read HIDISPKYSPVL and KYGN. A beta-D-glucoside is bound by residues glutamate 457, tryptophan 508, 515-516, and tyrosine 524; that span reads EW. Glutamate 457 (nucleophile) is an active-site residue.

It belongs to the glycosyl hydrolase 1 family. Homo- and heterodimer. Expressed in leaves only starting at day 6 after germination.

Its subcellular location is the plastid. It localises to the chloroplast. It catalyses the reaction Hydrolysis of terminal, non-reducing beta-D-glucosyl residues with release of beta-D-glucose.. The enzyme catalyses DIMBOA beta-D-glucoside + H2O = DIMBOA + D-glucose. It carries out the reaction DIBOA beta-D-glucoside + H2O = DIBOA + D-glucose. In terms of biological role, beta-glucosidase acting poorly on artificial aryl beta-glucosides. Has no activity toward the chromogenic substrate 6-bromo-2-naphthyl-beta-D-glucoside (6BNGlc). This chain is 4-hydroxy-7-methoxy-3-oxo-3,4-dihydro-2H-1,4-benzoxazin-2-yl glucoside beta-D-glucosidase 2, chloroplastic (GLU2), found in Zea mays (Maize).